Reading from the N-terminus, the 454-residue chain is Bifunctional protein GlmU (454 aa).

The segment at 1-230 (MSGRFAVILA…LSETMGVNDR (230 aa)) is pyrophosphorylase. Residues 9-12 (LAAG), K23, Q73, and 78-79 (GT) contribute to the UDP-N-acetyl-alpha-D-glucosamine site. D103 contributes to the Mg(2+) binding site. G140, E155, N170, and N228 together coordinate UDP-N-acetyl-alpha-D-glucosamine. N228 lines the Mg(2+) pocket. The interval 231 to 251 (VALSQAEAAMRKRINEEWMRQ) is linker. Positions 252–454 (GVTIIDPQTT…NKDNYVKKDV (203 aa)) are N-acetyltransferase. R333 and K351 together coordinate UDP-N-acetyl-alpha-D-glucosamine. The Proton acceptor role is filled by H363. Positions 366 and 377 each coordinate UDP-N-acetyl-alpha-D-glucosamine. Acetyl-CoA-binding positions include 386–387 (NY), S405, A423, and R440.

In the N-terminal section; belongs to the N-acetylglucosamine-1-phosphate uridyltransferase family. This sequence in the C-terminal section; belongs to the transferase hexapeptide repeat family. Homotrimer. It depends on Mg(2+) as a cofactor.

The protein resides in the cytoplasm. The catalysed reaction is alpha-D-glucosamine 1-phosphate + acetyl-CoA = N-acetyl-alpha-D-glucosamine 1-phosphate + CoA + H(+). It carries out the reaction N-acetyl-alpha-D-glucosamine 1-phosphate + UTP + H(+) = UDP-N-acetyl-alpha-D-glucosamine + diphosphate. It functions in the pathway nucleotide-sugar biosynthesis; UDP-N-acetyl-alpha-D-glucosamine biosynthesis; N-acetyl-alpha-D-glucosamine 1-phosphate from alpha-D-glucosamine 6-phosphate (route II): step 2/2. Its pathway is nucleotide-sugar biosynthesis; UDP-N-acetyl-alpha-D-glucosamine biosynthesis; UDP-N-acetyl-alpha-D-glucosamine from N-acetyl-alpha-D-glucosamine 1-phosphate: step 1/1. The protein operates within bacterial outer membrane biogenesis; LPS lipid A biosynthesis. Functionally, catalyzes the last two sequential reactions in the de novo biosynthetic pathway for UDP-N-acetylglucosamine (UDP-GlcNAc). The C-terminal domain catalyzes the transfer of acetyl group from acetyl coenzyme A to glucosamine-1-phosphate (GlcN-1-P) to produce N-acetylglucosamine-1-phosphate (GlcNAc-1-P), which is converted into UDP-GlcNAc by the transfer of uridine 5-monophosphate (from uridine 5-triphosphate), a reaction catalyzed by the N-terminal domain. This chain is Bifunctional protein GlmU, found in Shouchella clausii (strain KSM-K16) (Alkalihalobacillus clausii).